Here is a 519-residue protein sequence, read N- to C-terminus: C-glycoside 3-oxidase (519 aa).

Residue E41 coordinates FAD. The interval 43-93 (GPTVSNPPGAHVKNIEDPERRSHAQRASEGPGAGAETVNSPGAVKSGERRA) is disordered. The segment covering 55-64 (KNIEDPERRS) has biased composition (basic and acidic residues). Positions 118, 120, 124, 129, 131, and 234 each coordinate FAD. H440 (proton acceptor) is an active-site residue. N474 and T486 together coordinate FAD.

This sequence belongs to the GMC oxidoreductase family. In terms of assembly, monomer. Requires FAD as cofactor.

The enzyme catalyses isovitexin + O2 = 3''-dehydroisovitexin + H2O2. It carries out the reaction isoorientin + O2 = 3''-dehydroisoorientin + H2O2. It catalyses the reaction mangiferin + O2 = 3'-dehydromangiferin + H2O2. In terms of biological role, FAD-dependent C-glycoside-metabolizing enzyme that participates in the degradation of certain C-glycosides by catalyzing the oxidation of the hydroxyl group at the C3 position of the sugar moiety. Shows oxidase activity toward various C-glycosides such as isovitexin, isoorientin and mangiferin but cannot use carminic acid, puerarin, orientin or aloesin. Shows weak activity (100 to 1000-fold lower) with O-glycosides. Probably plays a crucial role in the metabolism of C-glycosides in nature. This is C-glycoside 3-oxidase from Arthrobacter globiformis (strain ATCC 8010 / DSM 20124 / JCM 1332 / NBRC 12137 / NCIMB 8907 / NRRL B-2979 / 168).